Here is a 226-residue protein sequence, read N- to C-terminus: 7-cyano-7-deazaguanine synthase (226 aa).

7 to 17 (LSGGMDSLVTT) is a binding site for ATP. Residues Cys187, Cys195, Cys198, and Cys201 each coordinate Zn(2+).

The protein belongs to the QueC family. The cofactor is Zn(2+).

It carries out the reaction 7-carboxy-7-deazaguanine + NH4(+) + ATP = 7-cyano-7-deazaguanine + ADP + phosphate + H2O + H(+). Its pathway is purine metabolism; 7-cyano-7-deazaguanine biosynthesis. In terms of biological role, catalyzes the ATP-dependent conversion of 7-carboxy-7-deazaguanine (CDG) to 7-cyano-7-deazaguanine (preQ(0)). The chain is 7-cyano-7-deazaguanine synthase from Chloroherpeton thalassium (strain ATCC 35110 / GB-78).